Reading from the N-terminus, the 265-residue chain is Ubiquinone biosynthesis protein COQ4 homolog, mitochondrial (265 aa).

A mitochondrion-targeting transit peptide spans 1-30 (MATLLRPVLRRLCGLPGLQRPAAEMPLRAR). Position 108 is a phosphoserine (Ser108). Zn(2+) is bound by residues His163, Asp164, His167, and Glu179.

This sequence belongs to the COQ4 family. In terms of assembly, component of a multi-subunit COQ enzyme complex, composed of at least COQ3, COQ4, COQ5, COQ6, COQ7 and COQ9. It depends on Zn(2+) as a cofactor. As to expression, expressed ubiquitously, but at high levels in liver, lung and pancreas.

It localises to the mitochondrion inner membrane. The enzyme catalyses 4-hydroxy-3-methoxy-5-(all-trans-decaprenyl)benzoate + H(+) = 2-methoxy-6-(all-trans-decaprenyl)phenol + CO2. Its pathway is cofactor biosynthesis; ubiquinone biosynthesis. In terms of biological role, lyase that catalyzes the C1-decarboxylation of 4-hydroxy-3-methoxy-5-(all-trans-decaprenyl)benzoic acid into 2-methoxy-6-(all-trans-decaprenyl)phenol during ubiquinone biosynthesis. The sequence is that of Ubiquinone biosynthesis protein COQ4 homolog, mitochondrial from Homo sapiens (Human).